The sequence spans 380 residues: Queuine tRNA-ribosyltransferase (380 aa).

D96 acts as the Proton acceptor in catalysis. Substrate is bound by residues 96–100, D150, Q193, and G220; that span reads DSGGF. The segment at 251–257 is RNA binding; the sequence is GVGAPDS. The active-site Nucleophile is D270. The segment at 275 to 279 is RNA binding; important for wobble base 34 recognition; it reads TRIAR. Residues C308, C310, C313, and H339 each coordinate Zn(2+).

This sequence belongs to the queuine tRNA-ribosyltransferase family. Homodimer. Within each dimer, one monomer is responsible for RNA recognition and catalysis, while the other monomer binds to the replacement base PreQ1. The cofactor is Zn(2+).

The catalysed reaction is 7-aminomethyl-7-carbaguanine + guanosine(34) in tRNA = 7-aminomethyl-7-carbaguanosine(34) in tRNA + guanine. It functions in the pathway tRNA modification; tRNA-queuosine biosynthesis. Its function is as follows. Catalyzes the base-exchange of a guanine (G) residue with the queuine precursor 7-aminomethyl-7-deazaguanine (PreQ1) at position 34 (anticodon wobble position) in tRNAs with GU(N) anticodons (tRNA-Asp, -Asn, -His and -Tyr). Catalysis occurs through a double-displacement mechanism. The nucleophile active site attacks the C1' of nucleotide 34 to detach the guanine base from the RNA, forming a covalent enzyme-RNA intermediate. The proton acceptor active site deprotonates the incoming PreQ1, allowing a nucleophilic attack on the C1' of the ribose to form the product. After dissociation, two additional enzymatic reactions on the tRNA convert PreQ1 to queuine (Q), resulting in the hypermodified nucleoside queuosine (7-(((4,5-cis-dihydroxy-2-cyclopenten-1-yl)amino)methyl)-7-deazaguanosine). The polypeptide is Queuine tRNA-ribosyltransferase (Streptococcus mutans serotype c (strain ATCC 700610 / UA159)).